A 420-amino-acid chain; its full sequence is Serine--tRNA ligase (420 aa).

229 to 231 (TAE) provides a ligand contact to L-serine. An ATP-binding site is contributed by 260–262 (RAE). Glu283 provides a ligand contact to L-serine. Residue 347 to 350 (EISS) participates in ATP binding. Ser382 lines the L-serine pocket.

Belongs to the class-II aminoacyl-tRNA synthetase family. Type-1 seryl-tRNA synthetase subfamily. As to quaternary structure, homodimer. The tRNA molecule binds across the dimer.

The protein localises to the cytoplasm. The enzyme catalyses tRNA(Ser) + L-serine + ATP = L-seryl-tRNA(Ser) + AMP + diphosphate + H(+). It catalyses the reaction tRNA(Sec) + L-serine + ATP = L-seryl-tRNA(Sec) + AMP + diphosphate + H(+). The protein operates within aminoacyl-tRNA biosynthesis; selenocysteinyl-tRNA(Sec) biosynthesis; L-seryl-tRNA(Sec) from L-serine and tRNA(Sec): step 1/1. Functionally, catalyzes the attachment of serine to tRNA(Ser). Is also able to aminoacylate tRNA(Sec) with serine, to form the misacylated tRNA L-seryl-tRNA(Sec), which will be further converted into selenocysteinyl-tRNA(Sec). The polypeptide is Serine--tRNA ligase (Caldicellulosiruptor saccharolyticus (strain ATCC 43494 / DSM 8903 / Tp8T 6331)).